Here is a 266-residue protein sequence, read N- to C-terminus: DNA damage-regulated autophagy modulator protein 2 (266 aa).

The next 6 membrane-spanning stretches (helical) occupy residues 8-28 (LSFL…FSYI), 53-73 (KCLF…TIYV), 88-108 (IIKL…GLSI), 118-138 (FAAH…YMFV), 160-180 (LLLV…SSVL), and 207-227 (ITTA…LTYI).

The protein belongs to the DRAM/TMEM150 family. In terms of tissue distribution, expression is down-regulated in ovarian tumors (at protein level). Widely expressed with highest levels in placenta and heart. Expressed in the retina. Not detected in brain or thymus.

Its subcellular location is the lysosome membrane. It localises to the photoreceptor inner segment. The protein localises to the apical cell membrane. In terms of biological role, plays a role in the initiation of autophagy. In the retina, might be involved in the process of photoreceptor cells renewal and recycling to preserve visual function. Induces apoptotic cell death when coexpressed with DRAM1. The chain is DNA damage-regulated autophagy modulator protein 2 (DRAM2) from Homo sapiens (Human).